Consider the following 370-residue polypeptide: MAQNKPNAFMAFVADWRACNRFGRGLSTSEAVAKCGPIWEGMSDRERGQYKSKAKDSNVLERESKTERLNCPGVHSKMQVEKNEAIDAELQMKRNIKRIVLKATNSMKLEEREFLFVSFNYFTKALNGDVYQPAELSACRFSLKGGISSNYSTMINPGHIIFGQTSDAQDHSRTTHKLPLPPNAMGEKNLGNLYSDTLKWLSASNDEEDEQYDHPVIVYTTPELMPVVKSCFRYLACEGDTDKHAEKIMVYDICYLFLTLKKTVLDLVGVPSDHMNIHVTNSFFRRDFFEFSSGIACDYHEEVDRTKYCTKSMVLRWGYMISHYICGDLAIPLQPRKHVPIEVKHSYTVTPGDSSLALDGTWTDSGYSGY.

The HMG box DNA-binding region spans 2-68 (AQNKPNAFMA…VLERESKTER (67 aa)).

The protein belongs to the maelstrom family.

The protein localises to the cytoplasm. Its subcellular location is the nucleus. Functionally, involved both in the piRNA and miRNA metabolic processes. As a component of the meiotic nuage, plays a central role during oogenesis by repressing transposable elements and preventing their mobilization, which is essential for the germline integrity. Repression of transposable elements is mediated via the piRNA metabolic process, which mediates the repression of transposable elements during meiosis by forming complexes composed of piRNAs and Piwi proteins and governs the repression of transposons. As a nuclear component, it is required for proper differentiation in the germline stem cell (GSC) lineage by repressing microRNA-7 (miR-7), thereby acting as an indirect regulator of bag-of-marbles (Bam). Acts by binding to the promoter of miR-7 gene and repressing its expression; miR-7 repression alleviates the Bam repression by miR-7, thereby allowing differentiation in the germline stem cell (GSC) lineage. The protein is Protein maelstrom 2 (mael2) of Drosophila pseudoobscura pseudoobscura (Fruit fly).